The primary structure comprises 221 residues: Thiamine-phosphate synthase (221 aa).

Residues 41–45 and N82 contribute to the 4-amino-2-methyl-5-(diphosphooxymethyl)pyrimidine site; that span reads QLRDK. The Mg(2+) site is built by D83 and D102. S120 contributes to the 4-amino-2-methyl-5-(diphosphooxymethyl)pyrimidine binding site. 2-[(2R,5Z)-2-carboxy-4-methylthiazol-5(2H)-ylidene]ethyl phosphate is bound at residue 146 to 148; sequence TPT. K149 contributes to the 4-amino-2-methyl-5-(diphosphooxymethyl)pyrimidine binding site. G177 is a 2-[(2R,5Z)-2-carboxy-4-methylthiazol-5(2H)-ylidene]ethyl phosphate binding site.

It belongs to the thiamine-phosphate synthase family. Requires Mg(2+) as cofactor.

It catalyses the reaction 2-[(2R,5Z)-2-carboxy-4-methylthiazol-5(2H)-ylidene]ethyl phosphate + 4-amino-2-methyl-5-(diphosphooxymethyl)pyrimidine + 2 H(+) = thiamine phosphate + CO2 + diphosphate. The catalysed reaction is 2-(2-carboxy-4-methylthiazol-5-yl)ethyl phosphate + 4-amino-2-methyl-5-(diphosphooxymethyl)pyrimidine + 2 H(+) = thiamine phosphate + CO2 + diphosphate. It carries out the reaction 4-methyl-5-(2-phosphooxyethyl)-thiazole + 4-amino-2-methyl-5-(diphosphooxymethyl)pyrimidine + H(+) = thiamine phosphate + diphosphate. It participates in cofactor biosynthesis; thiamine diphosphate biosynthesis; thiamine phosphate from 4-amino-2-methyl-5-diphosphomethylpyrimidine and 4-methyl-5-(2-phosphoethyl)-thiazole: step 1/1. In terms of biological role, condenses 4-methyl-5-(beta-hydroxyethyl)thiazole monophosphate (THZ-P) and 2-methyl-4-amino-5-hydroxymethyl pyrimidine pyrophosphate (HMP-PP) to form thiamine monophosphate (TMP). The polypeptide is Thiamine-phosphate synthase (Mycolicibacterium vanbaalenii (strain DSM 7251 / JCM 13017 / BCRC 16820 / KCTC 9966 / NRRL B-24157 / PYR-1) (Mycobacterium vanbaalenii)).